Here is a 275-residue protein sequence, read N- to C-terminus: 3-methyl-2-oxobutanoate hydroxymethyltransferase (275 aa).

D44 and D83 together coordinate Mg(2+). Residues 44–45 (DS), D83, and K113 contribute to the 3-methyl-2-oxobutanoate site. Position 115 (E115) interacts with Mg(2+). Residue E182 is the Proton acceptor of the active site.

This sequence belongs to the PanB family. Homodecamer; pentamer of dimers. Mg(2+) serves as cofactor.

Its subcellular location is the cytoplasm. The catalysed reaction is 3-methyl-2-oxobutanoate + (6R)-5,10-methylene-5,6,7,8-tetrahydrofolate + H2O = 2-dehydropantoate + (6S)-5,6,7,8-tetrahydrofolate. It participates in cofactor biosynthesis; (R)-pantothenate biosynthesis; (R)-pantoate from 3-methyl-2-oxobutanoate: step 1/2. Functionally, catalyzes the reversible reaction in which hydroxymethyl group from 5,10-methylenetetrahydrofolate is transferred onto alpha-ketoisovalerate to form ketopantoate. The sequence is that of 3-methyl-2-oxobutanoate hydroxymethyltransferase from Clostridium botulinum (strain Loch Maree / Type A3).